We begin with the raw amino-acid sequence, 435 residues long: Actin-like protein 7A (435 aa).

2 disordered regions span residues 1–20 (MWAP…VGNQ) and 29–65 (QTAS…ERPK). Residues 31–51 (ASLRDGPAKRAVWVRRRSSEP) form a required for interaction with TES region. Over residues 47 to 65 (RSSEPQEPTESKAAKERPK) the composition is skewed to basic and acidic residues.

This sequence belongs to the actin family. Interacts (via N-terminus) with TES (via LIM domain 2). Heterodimer with TES; the heterodimer interacts with ENAH to form a heterotrimer. Interacts with ACTL9. Interacts with CYLC1; the interaction may be relevant for proper acrosome attachment to the nuclear envelope.

The protein localises to the cytoplasm. It localises to the cytoskeleton. It is found in the golgi apparatus. The protein resides in the nucleus. Functionally, essential for normal spermatogenesis and male fertility. Required for normal sperm head morphology, acroplaxome formation, acrosome attachment, and acrosome granule stability. May anchor and stabilize acrosomal adherence to the acroplaxome at least in part by facilitating the presence of F-actin in the subacrosomal space. May play an important role in formation and fusion of Golgi-derived vesicles during acrosome biogenesis. In Macaca fascicularis (Crab-eating macaque), this protein is Actin-like protein 7A (ACTL7A).